Here is a 355-residue protein sequence, read N- to C-terminus: MNPTTKRAIKEIVVYALAFGCSWYAAHKLLSTLDPYRQKRQDTVSKSRKRLDEWAGEQVKELETLELNEYEQIVASQLVLPSEIDVSFDDIGGMDEHVNQLLQDVLFPLKYPEVFDTHGGLLSCPKGLLLYGPPGCGKTMLAKALAKQSQATFINVSVGLLTDKWFGESNKLVDALFTLARKLEPTIIFIDEIDTFLRQRQRTDHEAMAQIKAEFMSMWDGLLSGQSRVLVLGATNRPADIDEAIRRRMPKVFSIPLPNAEQRRKILELYLKKVPLEANFDWNGVVNATAGLSGSYIKEVCRSALSVPRRELFDKHGNDLEAIKYDIQSGGLRSLKTEDFYHYESLQNVSGIDVE.

An ATP-binding site is contributed by 132–139; it reads GPPGCGKT.

This sequence belongs to the AAA ATPase family.

The protein resides in the mitochondrion. This is an uncharacterized protein from Schizosaccharomyces pombe (strain 972 / ATCC 24843) (Fission yeast).